The sequence spans 1183 residues: Chromosome partition protein Smc (1183 aa).

An ATP-binding site is contributed by 32–39; it reads PNGSGKSN. The stretch at 162–483 forms a coiled coil; it reads EEAAGIKKLQ…KLSQDIREFE (322 aa). Residues 519-632 enclose the SMC hinge domain; it reads SGIDGVLISL…VENIDIATDI (114 aa). Residues 666 to 1019 are a coiled coil; it reads INQIFERKKE…VMDLIQEIDE (354 aa).

Belongs to the SMC family. Homodimer.

It localises to the cytoplasm. Functionally, required for chromosome condensation and partitioning. In Fusobacterium nucleatum subsp. nucleatum (strain ATCC 25586 / DSM 15643 / BCRC 10681 / CIP 101130 / JCM 8532 / KCTC 2640 / LMG 13131 / VPI 4355), this protein is Chromosome partition protein Smc.